We begin with the raw amino-acid sequence, 696 residues long: Elongation factor G (696 aa).

The tr-type G domain occupies 10–290 (THFRNIGIAA…AVVDYLPSPL (281 aa)). GTP contacts are provided by residues 19–26 (AHIDAGKT), 89–93 (DTPGH), and 143–146 (NKMD).

Belongs to the TRAFAC class translation factor GTPase superfamily. Classic translation factor GTPase family. EF-G/EF-2 subfamily.

It is found in the cytoplasm. Catalyzes the GTP-dependent ribosomal translocation step during translation elongation. During this step, the ribosome changes from the pre-translocational (PRE) to the post-translocational (POST) state as the newly formed A-site-bound peptidyl-tRNA and P-site-bound deacylated tRNA move to the P and E sites, respectively. Catalyzes the coordinated movement of the two tRNA molecules, the mRNA and conformational changes in the ribosome. In Deinococcus geothermalis (strain DSM 11300 / CIP 105573 / AG-3a), this protein is Elongation factor G.